The following is a 453-amino-acid chain: Bifunctional protein GlmU (453 aa).

A pyrophosphorylase region spans residues 1–227; that stretch reads MTQDIVILAA…EAEVAGVNDR (227 aa). UDP-N-acetyl-alpha-D-glucosamine-binding positions include 8 to 11, lysine 22, glutamine 73, 78 to 79, 100 to 102, glycine 137, glutamate 152, asparagine 167, and asparagine 225; these read LAAG, GT, and YGD. Residue aspartate 102 participates in Mg(2+) binding. Asparagine 225 contacts Mg(2+). The interval 228–248 is linker; it reads VQLAALERELQNQQAVSLMQN. The interval 249 to 453 is N-acetyltransferase; the sequence is GATLLDPSRI…KDNWPRPIKK (205 aa). UDP-N-acetyl-alpha-D-glucosamine is bound by residues arginine 331 and lysine 349. The active-site Proton acceptor is the histidine 361. UDP-N-acetyl-alpha-D-glucosamine contacts are provided by tyrosine 364 and asparagine 375. Acetyl-CoA contacts are provided by residues alanine 378, 384 to 385, serine 403, alanine 421, and arginine 438; that span reads NY.

It in the N-terminal section; belongs to the N-acetylglucosamine-1-phosphate uridyltransferase family. In the C-terminal section; belongs to the transferase hexapeptide repeat family. Homotrimer. Mg(2+) serves as cofactor.

The protein localises to the cytoplasm. The enzyme catalyses alpha-D-glucosamine 1-phosphate + acetyl-CoA = N-acetyl-alpha-D-glucosamine 1-phosphate + CoA + H(+). It carries out the reaction N-acetyl-alpha-D-glucosamine 1-phosphate + UTP + H(+) = UDP-N-acetyl-alpha-D-glucosamine + diphosphate. It functions in the pathway nucleotide-sugar biosynthesis; UDP-N-acetyl-alpha-D-glucosamine biosynthesis; N-acetyl-alpha-D-glucosamine 1-phosphate from alpha-D-glucosamine 6-phosphate (route II): step 2/2. Its pathway is nucleotide-sugar biosynthesis; UDP-N-acetyl-alpha-D-glucosamine biosynthesis; UDP-N-acetyl-alpha-D-glucosamine from N-acetyl-alpha-D-glucosamine 1-phosphate: step 1/1. It participates in bacterial outer membrane biogenesis; LPS lipid A biosynthesis. In terms of biological role, catalyzes the last two sequential reactions in the de novo biosynthetic pathway for UDP-N-acetylglucosamine (UDP-GlcNAc). The C-terminal domain catalyzes the transfer of acetyl group from acetyl coenzyme A to glucosamine-1-phosphate (GlcN-1-P) to produce N-acetylglucosamine-1-phosphate (GlcNAc-1-P), which is converted into UDP-GlcNAc by the transfer of uridine 5-monophosphate (from uridine 5-triphosphate), a reaction catalyzed by the N-terminal domain. In Marinomonas sp. (strain MWYL1), this protein is Bifunctional protein GlmU.